The chain runs to 651 residues: Threonine--tRNA ligase (651 aa).

The region spanning 1 to 61 is the TGS domain; it reads MIKITFPDNS…NDDATVKLLK (61 aa). Residues 242-541 form a catalytic region; that stretch reads DHRKIGKEMD…LIEHTAGKFP (300 aa). Cysteine 337, histidine 388, and histidine 518 together coordinate Zn(2+).

It belongs to the class-II aminoacyl-tRNA synthetase family. As to quaternary structure, homodimer. Zn(2+) is required as a cofactor.

The protein localises to the cytoplasm. It catalyses the reaction tRNA(Thr) + L-threonine + ATP = L-threonyl-tRNA(Thr) + AMP + diphosphate + H(+). Catalyzes the attachment of threonine to tRNA(Thr) in a two-step reaction: L-threonine is first activated by ATP to form Thr-AMP and then transferred to the acceptor end of tRNA(Thr). Also edits incorrectly charged L-seryl-tRNA(Thr). The polypeptide is Threonine--tRNA ligase (Parabacteroides distasonis (strain ATCC 8503 / DSM 20701 / CIP 104284 / JCM 5825 / NCTC 11152)).